A 525-amino-acid chain; its full sequence is GMP synthase [glutamine-hydrolyzing] (525 aa).

One can recognise a Glutamine amidotransferase type-1 domain in the interval Pro16–Gln205. Cys93 serves as the catalytic Nucleophile. Catalysis depends on residues His179 and Glu181. In terms of domain architecture, GMPS ATP-PPase spans Trp206–Arg399. An ATP-binding site is contributed by Ser233–Ala239.

As to quaternary structure, homodimer.

It catalyses the reaction XMP + L-glutamine + ATP + H2O = GMP + L-glutamate + AMP + diphosphate + 2 H(+). It functions in the pathway purine metabolism; GMP biosynthesis; GMP from XMP (L-Gln route): step 1/1. In terms of biological role, catalyzes the synthesis of GMP from XMP. The sequence is that of GMP synthase [glutamine-hydrolyzing] (guaA) from Mycobacterium tuberculosis (strain CDC 1551 / Oshkosh).